A 31-amino-acid chain; its full sequence is Cytochrome b6-f complex subunit 6 (31 aa).

A helical transmembrane segment spans residues 4 to 24; sequence ITSYFGFLLVALTITSALFIG.

This sequence belongs to the PetL family. As to quaternary structure, the 4 large subunits of the cytochrome b6-f complex are cytochrome b6, subunit IV (17 kDa polypeptide, PetD), cytochrome f and the Rieske protein, while the 4 small subunits are PetG, PetL, PetM and PetN. The complex functions as a dimer.

It localises to the plastid. Its subcellular location is the chloroplast thylakoid membrane. Functionally, component of the cytochrome b6-f complex, which mediates electron transfer between photosystem II (PSII) and photosystem I (PSI), cyclic electron flow around PSI, and state transitions. PetL is important for photoautotrophic growth as well as for electron transfer efficiency and stability of the cytochrome b6-f complex. The sequence is that of Cytochrome b6-f complex subunit 6 from Pelargonium hortorum (Common geranium).